The sequence spans 86 residues: Cytochrome c oxidase subunit 6B1 (86 aa).

At Ala-2 the chain carries N-acetylalanine. One can recognise a CHCH domain in the interval 27–73 (TRNCWQNYLDFHRCEKAMTAKGGDVSVCEWYRRVYKSLCPISWVSTW). A Cx9C motif motif is present at residues 30–40 (CWQNYLDFHRC). 2 disulfides stabilise this stretch: Cys-30-Cys-65 and Cys-40-Cys-54. The Cx10C motif signature appears at 54 to 65 (CEWYRRVYKSLC). N6-acetyllysine is present on Lys-62.

The protein belongs to the cytochrome c oxidase subunit 6B family. Component of the cytochrome c oxidase (complex IV, CIV), a multisubunit enzyme composed of 14 subunits. The complex is composed of a catalytic core of 3 subunits MT-CO1, MT-CO2 and MT-CO3, encoded in the mitochondrial DNA, and 11 supernumerary subunits COX4I, COX5A, COX5B, COX6A, COX6B, COX6C, COX7A, COX7B, COX7C, COX8 and NDUFA4, which are encoded in the nuclear genome. The complex exists as a monomer or a dimer and forms supercomplexes (SCs) in the inner mitochondrial membrane with NADH-ubiquinone oxidoreductase (complex I, CI) and ubiquinol-cytochrome c oxidoreductase (cytochrome b-c1 complex, complex III, CIII), resulting in different assemblies (supercomplex SCI(1)III(2)IV(1) and megacomplex MCI(2)III(2)IV(2)).

It localises to the mitochondrion inner membrane. It participates in energy metabolism; oxidative phosphorylation. In terms of biological role, component of the cytochrome c oxidase, the last enzyme in the mitochondrial electron transport chain which drives oxidative phosphorylation. The respiratory chain contains 3 multisubunit complexes succinate dehydrogenase (complex II, CII), ubiquinol-cytochrome c oxidoreductase (cytochrome b-c1 complex, complex III, CIII) and cytochrome c oxidase (complex IV, CIV), that cooperate to transfer electrons derived from NADH and succinate to molecular oxygen, creating an electrochemical gradient over the inner membrane that drives transmembrane transport and the ATP synthase. Cytochrome c oxidase is the component of the respiratory chain that catalyzes the reduction of oxygen to water. Electrons originating from reduced cytochrome c in the intermembrane space (IMS) are transferred via the dinuclear copper A center (CU(A)) of subunit 2 and heme A of subunit 1 to the active site in subunit 1, a binuclear center (BNC) formed by heme A3 and copper B (CU(B)). The BNC reduces molecular oxygen to 2 water molecules using 4 electrons from cytochrome c in the IMS and 4 protons from the mitochondrial matrix. This chain is Cytochrome c oxidase subunit 6B1 (COX6B1), found in Carlito syrichta (Philippine tarsier).